The sequence spans 331 residues: Ferrochelatase (331 aa).

2 residues coordinate Fe cation: His-187 and Glu-286.

The protein belongs to the ferrochelatase family.

It is found in the cytoplasm. It catalyses the reaction heme b + 2 H(+) = protoporphyrin IX + Fe(2+). Its pathway is porphyrin-containing compound metabolism; protoheme biosynthesis; protoheme from protoporphyrin-IX: step 1/1. Its function is as follows. Catalyzes the ferrous insertion into protoporphyrin IX. The polypeptide is Ferrochelatase (Legionella pneumophila (strain Corby)).